The chain runs to 443 residues: Frizzled/smoothened-like sans CRD protein E (443 aa).

The signal sequence occupies residues 1-23; that stretch reads MISHIKKFINLYTIVFLLYILYS. Topologically, residues 24–83 are extracellular; the sequence is NENFFVKGQKLPPGFCPSPLIYRNTTDRQSDIDIGFQFLGETNCVQPCPSLILTENEWNK. N-linked (GlcNAc...) asparagine glycosylation occurs at N47. A helical transmembrane segment spans residues 84–104; sequence VFNMSLVAGTISMFALIFLII. Residues 105-120 are Cytoplasmic-facing; that stretch reads TYSPLVNNIKDYTRHT. Residues 121-141 form a helical membrane-spanning segment; sequence VGILFLFSGILIAMTTDGRQL. The Extracellular segment spans residues 142–166; that stretch reads WDIDLGFKKYCPEPGRFARQSDSKC. The chain crosses the membrane as a helical span at residues 167 to 187; sequence LVTAIFFQFGCVTALLWWAAI. The Cytoplasmic segment spans residues 188–203; the sequence is SVDLWITIKKIKISKK. Residues 204-224 traverse the membrane as a helical segment; the sequence is LFIIYTIAVNIVTIVLTFGPV. The Extracellular segment spans residues 225–248; that stretch reads GSKQYGYIDAAIGCWLMDLKYQVG. The helical transmembrane segment at 249-269 threads the bilayer; it reads YFWAPVGFCLCVGCVSIVLIL. Topologically, residues 270-289 are cytoplasmic; it reads KEIYNVSDAVKKKLLAKHLK. A helical transmembrane segment spans residues 290 to 310; the sequence is PLMLIILMLTEFIYMFIFYSY. Topologically, residues 311–350 are extracellular; it reads TTSKKNHYHDIIEEYVVCLFVHAANPSVCKIGSTISPSAH. The helical transmembrane segment at 351 to 371 threads the bilayer; the sequence is FFFHLCIRLMGLEVLIFYGFT. Residues 372–443 are Cytoplasmic-facing; sequence RQTRKIWMRS…SGIDDSKHDP (72 aa). 2 stretches are compositionally biased toward low complexity: residues 397 to 410 and 419 to 432; these read SSSNDSKSSNNKTS and ESSEQSNEPEQSIE. The interval 397–443 is disordered; the sequence is SSSNDSKSSNNKTSGRVTGGFGESSEQSNEPEQSIELSGIDDSKHDP.

This sequence belongs to the G-protein coupled receptor Fz/Smo family.

It localises to the membrane. The chain is Frizzled/smoothened-like sans CRD protein E (fscE) from Dictyostelium discoideum (Social amoeba).